The chain runs to 748 residues: Antigen peptide transporter 1 (748 aa).

The Cytoplasmic segment spans residues 1 to 15; it reads MASSRCPAPRGCRCL. Residues 16 to 36 traverse the membrane as a helical segment; it reads PGASLAWLGTVLLLLADWVLL. The Lumenal segment spans residues 37–53; that stretch reads RTALPRIFSLLVPTALP. Residues 54-76 form a helical membrane-spanning segment; the sequence is LLRVWAVGLSRWAVLWLGACGVL. Residues 77 to 92 are Cytoplasmic-facing; sequence RATVGSKSENAGAQGW. A helical transmembrane segment spans residues 93–113; the sequence is LAALKPLAAALGLALPGLALF. Residues 114 to 133 are Lumenal-facing; that stretch reads RELISWGAPGSADSTRLLHW. The chain crosses the membrane as a helical span at residues 134-154; sequence GSHPTAFVVSYAAALPAAALW. At 155–186 the chain is on the cytoplasmic side; it reads HKLGSLWVPGGQGGSGNPVRRLLGCLGSETRR. Residues 187–207 form a helical membrane-spanning segment; that stretch reads LSLFLVLVVLSSLGEMAIPFF. The ABC transmembrane type-1 domain occupies 187–470; sequence LSLFLVLVVL…LLSIYPRVQK (284 aa). Residues 208-227 lie on the Lumenal side of the membrane; that stretch reads TGRLTDWILQDGSADTFTRN. A helical transmembrane segment spans residues 228 to 248; sequence LTLMSILTIASAVLEFVGDGI. At 249–298 the chain is on the cytoplasmic side; that stretch reads YNNTMGHVHSHLQGEVFGAVLRQETEFFQQNQTGNIMSRVTEDTSTLSDS. A helical membrane pass occupies residues 299–319; the sequence is LSENLSLFLWYLVRGLCLLGI. Residues 320–328 are Lumenal-facing; it reads MLWGSVSLT. Residues 329–349 traverse the membrane as a helical segment; that stretch reads MVTLITLPLLFLLPKKVGKWY. At 350–418 the chain is on the cytoplasmic side; sequence QLLEVQVRES…AVNSWTTSIS (69 aa). The interval 375 to 420 is part of the peptide-binding site; it reads PTVRSFANEEGEAQKFREKLQEIKTLNQKEAVAYAVNSWTTSISGM. The helical transmembrane segment at 419 to 439 threads the bilayer; it reads GMLLKVGILYIGGQLVTSGAV. Residues 440–443 are Lumenal-facing; the sequence is SSGN. Residues 444–464 traverse the membrane as a helical segment; sequence LVTFVLYQMQFTQAVEVLLSI. Positions 453-487 are part of the peptide-binding site; sequence QFTQAVEVLLSIYPRVQKAVGSSEKIFEYLDRTPR. Residues 465–748 are Cytoplasmic-facing; it reads YPRVQKAVGS…MVQAPADAPE (284 aa). Residues 503–742 form the ABC transporter domain; that stretch reads VQFQDVSFAY…KGCYWAMVQA (240 aa). ATP is bound by residues 538–546, 641–647, and Q701; these read GPNGSGKST and SQLSGGQ. A Mg(2+)-binding site is contributed by S545.

The protein belongs to the ABC transporter superfamily. ABCB family. MHC peptide exporter (TC 3.A.1.209) subfamily. As to quaternary structure, heterodimer of TAP1 and TAP2 (TAP1-TAP2). A component of the peptide loading complex (PLC), interacts via TAPBP with MHCI heterodimer; this interaction mediates peptide-MHCI assembly. Recruits TAPBP in a 1:1 stoichiometry. Interacts with classical MHCI such as HLA-A*02-B2M; this interaction is obligatory for the loading of peptide epitopes. Interacts with non-classical MHCI molecules including HLA-E-B2M and HLA-F-B2M as well as PLC component CALR before the peptide loading. Interacts with PSMB5 and PSMB8. (Microbial infection) Interacts with Epstein-Barr virus BNLF2a. In terms of assembly, (Microbial infection) Interacts with herpes simplex virus US12/ICP47. As to quaternary structure, (Microbial infection) Interacts with adenovirus E3-19K glycoprotein, which binds TAP1-TAP2 and acts as a TAPBP inhibitor, preventing TAP1-TAP2 association with MHCI. It depends on Mg(2+) as a cofactor. As to expression, highly expressed in professional APCs monocytes and dendritic cells as well as in lymphocyte subsets T cells, B cells and NK cells.

It localises to the endoplasmic reticulum membrane. The catalysed reaction is a peptide antigen(in) + ATP + H2O = a peptide antigen(out) + ADP + phosphate + H(+). Its activity is regulated as follows. Inhibited at high ER lumenal peptide concentrations. With respect to regulation, (Microbial infection) Inhibited by herpes simplex virus US12/ICP47 protein, which blocks the peptide-binding site of TAP1-TAP2. (Microbial infection) Inhibited by human cytomegalovirus US6 glycoprotein, which binds to the lumenal side of TAP1-TAP2 complex and inhibits peptide translocation by specifically blocking ATP-binding and preventing TAP1-TAP2 conformational rearrangement induced by peptide binding. ABC transporter associated with antigen processing. In complex with TAP2 mediates unidirectional translocation of peptide antigens from cytosol to endoplasmic reticulum (ER) for loading onto MHC class I (MHCI) molecules. Uses the chemical energy of ATP to export peptides against the concentration gradient. During the transport cycle alternates between 'inward-facing' state with peptide binding site facing the cytosol to 'outward-facing' state with peptide binding site facing the ER lumen. Peptide antigen binding to ATP-loaded TAP1-TAP2 induces a switch to hydrolysis-competent 'outward-facing' conformation ready for peptide loading onto nascent MHCI molecules. Subsequently ATP hydrolysis resets the transporter to the 'inward facing' state for a new cycle. Typically transports intracellular peptide antigens of 8 to 13 amino acids that arise from cytosolic proteolysis via IFNG-induced immunoproteasome. Binds peptides with free N- and C-termini, the first three and the C-terminal residues being critical. Preferentially selects peptides having a highly hydrophobic residue at position 3 and hydrophobic or charged residues at the C-terminal anchor. Proline at position 2 has the most destabilizing effect. As a component of the peptide loading complex (PLC), acts as a molecular scaffold essential for peptide-MHCI assembly and antigen presentation. The protein is Antigen peptide transporter 1 of Homo sapiens (Human).